A 117-amino-acid chain; its full sequence is Immunoglobulin heavy variable 3-48 (117 aa).

The first 19 residues, M1–C19, serve as a signal peptide directing secretion. The framework-1 stretch occupies residues E20 to S44. In terms of domain architecture, Ig-like spans E20–R117. A disulfide bond links C41 and C115. The segment at G45–E52 is complementarity-determining-1. The tract at residues M53–Y69 is framework-2. The interval I70–I77 is complementarity-determining-2. Residues Y78–C115 form a framework-3 region. The complementarity-determining-3 stretch occupies residues A116–R117.

As to quaternary structure, immunoglobulins are composed of two identical heavy chains and two identical light chains; disulfide-linked. In terms of processing, the N-terminus is blocked.

It localises to the secreted. Its subcellular location is the cell membrane. In terms of biological role, v region of the variable domain of immunoglobulin heavy chains that participates in the antigen recognition. Immunoglobulins, also known as antibodies, are membrane-bound or secreted glycoproteins produced by B lymphocytes. In the recognition phase of humoral immunity, the membrane-bound immunoglobulins serve as receptors which, upon binding of a specific antigen, trigger the clonal expansion and differentiation of B lymphocytes into immunoglobulins-secreting plasma cells. Secreted immunoglobulins mediate the effector phase of humoral immunity, which results in the elimination of bound antigens. The antigen binding site is formed by the variable domain of one heavy chain, together with that of its associated light chain. Thus, each immunoglobulin has two antigen binding sites with remarkable affinity for a particular antigen. The variable domains are assembled by a process called V-(D)-J rearrangement and can then be subjected to somatic hypermutations which, after exposure to antigen and selection, allow affinity maturation for a particular antigen. This is Immunoglobulin heavy variable 3-48 from Homo sapiens (Human).